The chain runs to 299 residues: Probable xyloglucan endotransglucosylase/hydrolase protein 10 (299 aa).

The first 29 residues, 1 to 29 (MTLINRSKPFVLLVGFSIISSLLLWVSQA), serve as a signal peptide directing secretion. The region spanning 30 to 225 (SVVSSGDFNK…WSKGPFVASF (196 aa)) is the GH16 domain. N-linked (GlcNAc...) asparagine glycosylation is present at Asn-51. The active-site Nucleophile is the Glu-111. Catalysis depends on Glu-115, which acts as the Proton donor. Residues Glu-115, 128–130 (QTN), 138–140 (NRE), 204–205 (SW), and Gly-209 each bind xyloglucan. 2 disulfide bridges follow: Cys-233/Cys-242 and Cys-280/Cys-294. Asn-238 carries N-linked (GlcNAc...) asparagine glycosylation. Xyloglucan is bound at residue Arg-285.

This sequence belongs to the glycosyl hydrolase 16 family. XTH group 1 subfamily. Contains at least one intrachain disulfide bond essential for its enzymatic activity.

The protein localises to the secreted. It is found in the cell wall. Its subcellular location is the extracellular space. The protein resides in the apoplast. The catalysed reaction is breaks a beta-(1-&gt;4) bond in the backbone of a xyloglucan and transfers the xyloglucanyl segment on to O-4 of the non-reducing terminal glucose residue of an acceptor, which can be a xyloglucan or an oligosaccharide of xyloglucan.. Its function is as follows. Catalyzes xyloglucan endohydrolysis (XEH) and/or endotransglycosylation (XET). Cleaves and religates xyloglucan polymers, an essential constituent of the primary cell wall, and thereby participates in cell wall construction of growing tissues. The chain is Probable xyloglucan endotransglucosylase/hydrolase protein 10 (XTH10) from Arabidopsis thaliana (Mouse-ear cress).